The primary structure comprises 587 residues: Membrane protein insertase YidC (587 aa).

5 helical membrane-spanning segments follow: residues 5–25 (SVIG…FMKP), 365–385 (GLII…LSLA), 430–450 (LGGC…FYVF), 480–500 (LPLY…TVFF), and 516–536 (IMIW…PSGL).

It belongs to the OXA1/ALB3/YidC family. Type 1 subfamily. As to quaternary structure, interacts with the Sec translocase complex via SecD. Specifically interacts with transmembrane segments of nascent integral membrane proteins during membrane integration.

The protein localises to the cell inner membrane. Required for the insertion and/or proper folding and/or complex formation of integral membrane proteins into the membrane. Involved in integration of membrane proteins that insert both dependently and independently of the Sec translocase complex, as well as at least some lipoproteins. Aids folding of multispanning membrane proteins. The polypeptide is Membrane protein insertase YidC (Chlorobaculum parvum (strain DSM 263 / NCIMB 8327) (Chlorobium vibrioforme subsp. thiosulfatophilum)).